A 323-amino-acid chain; its full sequence is uncharacterized protein (323 aa).

The signal sequence occupies residues Met-1–Ala-45. The segment at Phe-186–Val-227 is disordered. The next 2 helical transmembrane spans lie at Ser-269–Thr-289 and Ala-290–Val-310.

It localises to the cell membrane. This is an uncharacterized protein from Mycobacterium tuberculosis (strain CDC 1551 / Oshkosh).